The primary structure comprises 335 residues: Aliphatic sulfonates import ATP-binding protein SsuB (335 aa).

The disordered stretch occupies residues 48–71 (PFASGGAFGRAPRDDDDDRRGAGD). One can recognise an ABC transporter domain in the interval 74-293 (VRLTRVSKRY…ARASAAFAEL (220 aa)). 106–113 (GRSGCGKS) is a binding site for ATP.

The protein belongs to the ABC transporter superfamily. Aliphatic sulfonates importer (TC 3.A.1.17.2) family. The complex is composed of two ATP-binding proteins (SsuB), two transmembrane proteins (SsuC) and a solute-binding protein (SsuA).

The protein resides in the cell inner membrane. It carries out the reaction ATP + H2O + aliphatic sulfonate-[sulfonate-binding protein]Side 1 = ADP + phosphate + aliphatic sulfonateSide 2 + [sulfonate-binding protein]Side 1.. Part of the ABC transporter complex SsuABC involved in aliphatic sulfonates import. Responsible for energy coupling to the transport system. This is Aliphatic sulfonates import ATP-binding protein SsuB from Burkholderia thailandensis (strain ATCC 700388 / DSM 13276 / CCUG 48851 / CIP 106301 / E264).